We begin with the raw amino-acid sequence, 346 residues long: Acetylpolyamine amidohydrolase 1 (346 aa).

His-161 (proton donor/acceptor) is an active-site residue. The Zn(2+) site is built by Asp-197, His-199, and Asp-286.

Belongs to the histone deacetylase family. In terms of assembly, homodimer. Zn(2+) serves as cofactor.

The enzyme catalyses N-acetylputrescine + H2O = putrescine + acetate. It carries out the reaction N-acetylcadaverine + H2O = cadaverine + acetate. It catalyses the reaction N(1)-acetylspermine + H2O = spermine + acetate. The catalysed reaction is N(1)-acetylspermidine + H2O = spermidine + acetate. It functions in the pathway amine and polyamine metabolism. Its function is as follows. Catalyzes the deacetylation of acetylated polyamines such as N-acetylputrescine, N-acetylcadaverine, N(1)-acetylspermine and N(1)-acetylspermidine. Plays an important role in the metabolism of acetylated polyamines in P.aeruginosa. Is involved in the degradation pathways of N-acetylputrescine and N-acetylcadaverine, that allow P.aeruginosa to utilize these acetylpolyamines as a carbon source under glucose starvation. In vitro, can also hydrolyze artificial trifluoroacetylated and acetylated lysine-derivatives. The protein is Acetylpolyamine amidohydrolase 1 of Pseudomonas aeruginosa (strain ATCC 15692 / DSM 22644 / CIP 104116 / JCM 14847 / LMG 12228 / 1C / PRS 101 / PAO1).